Here is a 31-residue protein sequence, read N- to C-terminus: Photosystem II reaction center protein T (31 aa).

The chain crosses the membrane as a helical span at residues 3-23 (SVAYILILTMALAVLFFAIAF).

Belongs to the PsbT family. PSII is composed of 1 copy each of membrane proteins PsbA, PsbB, PsbC, PsbD, PsbE, PsbF, PsbH, PsbI, PsbJ, PsbK, PsbL, PsbM, PsbT, PsbX, PsbY, PsbZ, Psb30/Ycf12, peripheral proteins PsbO, CyanoQ (PsbQ), PsbU, PsbV and a large number of cofactors. It forms dimeric complexes.

It localises to the cellular thylakoid membrane. In terms of biological role, found at the monomer-monomer interface of the photosystem II (PS II) dimer, plays a role in assembly and dimerization of PSII. PSII is a light-driven water plastoquinone oxidoreductase, using light energy to abstract electrons from H(2)O, generating a proton gradient subsequently used for ATP formation. This Gloeothece citriformis (strain PCC 7424) (Cyanothece sp. (strain PCC 7424)) protein is Photosystem II reaction center protein T.